We begin with the raw amino-acid sequence, 109 residues long: Period circadian protein (109 aa).

A disordered region spans residues 29 to 100 (ITAPVDVDPH…TGTSSGSVQL (72 aa)). Over residues 69 to 97 (SGNFNSGSNLHIGSITNTSNTGTGTSSGS) the composition is skewed to low complexity.

In terms of assembly, forms a heterodimer with timeless (TIM); the complex then translocates into the nucleus. Phosphorylated with a circadian rhythmicity, probably by the double-time protein (dbt). Phosphorylation could be implicated in the stability of per monomer and in the formation of heterodimer per-tim.

The protein resides in the nucleus. Its subcellular location is the cytoplasm. It is found in the perinuclear region. Its function is as follows. Essential for biological clock functions. Determines the period length of circadian and ultradian rhythms; an increase in PER dosage leads to shortened circadian rhythms and a decrease leads to lengthened circadian rhythms. Essential for the circadian rhythmicity of locomotor activity, eclosion behavior, and for the rhythmic component of the male courtship song that originates in the thoracic nervous system. The biological cycle depends on the rhythmic formation and nuclear localization of the TIM-PER complex. Light induces the degradation of TIM, which promotes elimination of PER. Nuclear activity of the heterodimer coordinatively regulates PER and TIM transcription through a negative feedback loop. Behaves as a negative element in circadian transcriptional loop. Does not appear to bind DNA, suggesting indirect transcriptional inhibition. The chain is Period circadian protein (per) from Loxocera albiseta (Rust fly).